We begin with the raw amino-acid sequence, 443 residues long: MASRIADSLFAFTGPQQCLPRAPKLASARLSPGVYAVRPIDLLLKGTRRTFLVPAKKRIGCIKAVFVPVAPPSADNAEDREQLAESYGFKQIGQDLPDNVTLKDIMDTLPKEVFEIDDVKAWKSVLISVTSYALGLFMIAKAPWYLLPLAWAWTGTAVTGFFVIGHDCAHKSFSKNKLVEDIVGTLAFLPLVYPYEPWRFKHDRHHAKTNMLVHDTAWQPVPPEEFDSSPVLRKAIIFGYGPIRPWLSIAHWVNWHFNLRKFRPSEVNRVKISLACVFAFMAVGWPLIIYKVGVLGWVKFWLMPWLGYHFWMSTFTMVHHTAPHIPFKPADEWNAAQAQLNGTVHCDYPSWIEILCHDINVHIPHHISPRIPSYNLRAAHQSIQENWGKYTNLATWNWRLMKTIMTVCHVYDKEENYIPFDRLAPEESQPITFLKKAMPDYAA.

The transit peptide at 1–64 (MASRIADSLF…AKKRIGCIKA (64 aa)) directs the protein to the chloroplast. A Histidine box-1 motif is present at residues 166-170 (HDCAH). The Histidine box-2 motif lies at 202–206 (HDRHH). The Histidine box-3 motif lies at 362 to 366 (HIPHH).

It belongs to the fatty acid desaturase type 1 family.

The protein localises to the plastid. It is found in the chloroplast membrane. It catalyses the reaction a (9Z)-octadecenoyl-containing glycerolipid + 2 reduced [2Fe-2S]-[ferredoxin] + O2 + 2 H(+) = a (9Z,12Z)-octadecadienoyl-containing glycerolipid + 2 oxidized [2Fe-2S]-[ferredoxin] + 2 H2O. It participates in lipid metabolism; polyunsaturated fatty acid biosynthesis. Chloroplast omega-6 fatty acid desaturase introduces the second double bond in the biosynthesis of 16:3 and 18:3 fatty acids, important constituents of plant membranes. It is thought to use ferredoxin as an electron donor and to act on fatty acids esterified to galactolipids, sulfolipids and phosphatidylglycerol. This is Omega-6 fatty acid desaturase, chloroplastic from Brassica napus (Rape).